The sequence spans 293 residues: Sodium-type flagellar protein MotY (293 aa).

The N-terminal stretch at 1–21 (MNKWLITSGVMLSLLSANSYA) is a signal peptide. The 118-residue stretch at 175–292 (YSFEDIAFTI…RVVISLGRTQ (118 aa)) folds into the OmpA-like domain.

The protein localises to the cell membrane. Functionally, may play the role of a stator in the sodium flagellar motor, stabilizing the force-generating unit through direct interaction with the cell wall. The protein is Sodium-type flagellar protein MotY of Vibrio parahaemolyticus serotype O3:K6 (strain RIMD 2210633).